A 348-amino-acid polypeptide reads, in one-letter code: Inosamine-phosphate amidinotransferase 1 (348 aa).

Catalysis depends on residues aspartate 179 and histidine 227. The active-site Amidino-cysteine intermediate is cysteine 332.

This sequence belongs to the amidinotransferase family. In terms of assembly, homodimer.

The catalysed reaction is 1-amino-1-deoxy-scyllo-inositol 4-phosphate + L-arginine = 1-guanidino-1-deoxy-scyllo-inositol 4-phosphate + L-ornithine. The protein operates within antibiotic biosynthesis; streptomycin biosynthesis. Catalyzes two non-consecutive transamidination reactions. It converts scyllo-inosamine 4-phosphate into N-amidino-scyllo-inosamine 4-phosphate and N1-amidinostreptamine 6-phosphate into streptidine 6-phosphate. The sequence is that of Inosamine-phosphate amidinotransferase 1 (strB1) from Streptomyces glaucescens.